A 284-amino-acid polypeptide reads, in one-letter code: Bifunctional protein FolD (284 aa).

NADP(+) is bound by residues 165–167, serine 190, and isoleucine 231; that span reads GRS.

The protein belongs to the tetrahydrofolate dehydrogenase/cyclohydrolase family. As to quaternary structure, homodimer.

It carries out the reaction (6R)-5,10-methylene-5,6,7,8-tetrahydrofolate + NADP(+) = (6R)-5,10-methenyltetrahydrofolate + NADPH. The catalysed reaction is (6R)-5,10-methenyltetrahydrofolate + H2O = (6R)-10-formyltetrahydrofolate + H(+). It functions in the pathway one-carbon metabolism; tetrahydrofolate interconversion. Functionally, catalyzes the oxidation of 5,10-methylenetetrahydrofolate to 5,10-methenyltetrahydrofolate and then the hydrolysis of 5,10-methenyltetrahydrofolate to 10-formyltetrahydrofolate. This is Bifunctional protein FolD from Clostridium kluyveri (strain ATCC 8527 / DSM 555 / NBRC 12016 / NCIMB 10680 / K1).